Reading from the N-terminus, the 199-residue chain is Probable GTP-binding protein EngB (199 aa).

One can recognise an EngB-type G domain in the interval 28 to 199; that stretch reads DLPEIALAGR…DSWDAILEQV (172 aa). Residues 36–43, 63–67, 81–84, 148–151, and 180–182 each bind GTP; these read GRSNVGKS, GKTQL, DVPG, TKAD, and FSS. 2 residues coordinate Mg(2+): Ser-43 and Thr-65.

This sequence belongs to the TRAFAC class TrmE-Era-EngA-EngB-Septin-like GTPase superfamily. EngB GTPase family. It depends on Mg(2+) as a cofactor.

Its function is as follows. Necessary for normal cell division and for the maintenance of normal septation. The chain is Probable GTP-binding protein EngB from Streptococcus pyogenes serotype M49 (strain NZ131).